Here is a 485-residue protein sequence, read N- to C-terminus: Glutamyl-tRNA(Gln) amidotransferase subunit A (485 aa).

Catalysis depends on charge relay system residues Lys79 and Ser154. The Acyl-ester intermediate role is filled by Ser178.

The protein belongs to the amidase family. GatA subfamily. In terms of assembly, heterotrimer of A, B and C subunits.

It catalyses the reaction L-glutamyl-tRNA(Gln) + L-glutamine + ATP + H2O = L-glutaminyl-tRNA(Gln) + L-glutamate + ADP + phosphate + H(+). Its function is as follows. Allows the formation of correctly charged Gln-tRNA(Gln) through the transamidation of misacylated Glu-tRNA(Gln) in organisms which lack glutaminyl-tRNA synthetase. The reaction takes place in the presence of glutamine and ATP through an activated gamma-phospho-Glu-tRNA(Gln). The protein is Glutamyl-tRNA(Gln) amidotransferase subunit A of Staphylococcus epidermidis (strain ATCC 12228 / FDA PCI 1200).